Reading from the N-terminus, the 704-residue chain is Polyribonucleotide nucleotidyltransferase (704 aa).

2 residues coordinate Mg(2+): D490 and D496. Positions 557-616 (PKIEMIQIKPAKIKDVIGKGGETINSIIDETGVKIDIDQDGNVSIASSDAEMIKKAIKII) constitute a KH domain. One can recognise an S1 motif domain in the interval 626–694 (GQVYLAKVVR…KQGRVNVSRK (69 aa)).

The protein belongs to the polyribonucleotide nucleotidyltransferase family. Mg(2+) is required as a cofactor.

It is found in the cytoplasm. The enzyme catalyses RNA(n+1) + phosphate = RNA(n) + a ribonucleoside 5'-diphosphate. Functionally, involved in mRNA degradation. Catalyzes the phosphorolysis of single-stranded polyribonucleotides processively in the 3'- to 5'-direction. This Enterococcus faecalis (strain ATCC 700802 / V583) protein is Polyribonucleotide nucleotidyltransferase.